The chain runs to 154 residues: Ribonuclease 8 (154 aa).

Positions 1–27 (MAPARAGCCPLLLLLLGLWVAQIPVSA) are cleaved as a signal peptide. His42 serves as the catalytic Proton acceptor. Disulfide bonds link Cys64–Cys118 and Cys89–Cys96. Substrate is bound by residues 65 to 69 (KDLNT) and Lys90. His149 serves as the catalytic Proton donor.

Belongs to the pancreatic ribonuclease family.

Its subcellular location is the secreted. Its function is as follows. Has a low ribonuclease activity. The protein is Ribonuclease 8 (RNASE8) of Chlorocebus aethiops (Green monkey).